Consider the following 235-residue polypeptide: Small ribosomal subunit protein eS4 (235 aa).

In terms of domain architecture, S4 RNA-binding spans Val-38–Asp-99.

Belongs to the eukaryotic ribosomal protein eS4 family.

This is Small ribosomal subunit protein eS4 (rps4e) from Thermoplasma acidophilum (strain ATCC 25905 / DSM 1728 / JCM 9062 / NBRC 15155 / AMRC-C165).